The primary structure comprises 40 residues: Photosystem II reaction center protein J (40 aa).

Residues 8–28 (IPLWLVGTVAGILVIGLIGIF) form a helical membrane-spanning segment.

The protein belongs to the PsbJ family. PSII is composed of 1 copy each of membrane proteins PsbA, PsbB, PsbC, PsbD, PsbE, PsbF, PsbH, PsbI, PsbJ, PsbK, PsbL, PsbM, PsbT, PsbX, PsbY, PsbZ, Psb30/Ycf12, at least 3 peripheral proteins of the oxygen-evolving complex and a large number of cofactors. It forms dimeric complexes.

The protein resides in the plastid. It is found in the chloroplast thylakoid membrane. Functionally, one of the components of the core complex of photosystem II (PSII). PSII is a light-driven water:plastoquinone oxidoreductase that uses light energy to abstract electrons from H(2)O, generating O(2) and a proton gradient subsequently used for ATP formation. It consists of a core antenna complex that captures photons, and an electron transfer chain that converts photonic excitation into a charge separation. This chain is Photosystem II reaction center protein J, found in Gnetum parvifolium (Small-leaved jointfir).